The primary structure comprises 231 residues: NADH-ubiquinone oxidoreductase chain 4 (231 aa).

A run of 6 helical transmembrane segments spans residues 1-21 (PIAG…YGII), 34-54 (LFLP…LTCL), 63-85 (IAYS…TPWG), 89-111 (AMAL…NTTY), 128-148 (ILPM…AIPP), and 156-176 (LLIM…LGLS).

The protein belongs to the complex I subunit 4 family.

The protein resides in the mitochondrion membrane. The catalysed reaction is a ubiquinone + NADH + 5 H(+)(in) = a ubiquinol + NAD(+) + 4 H(+)(out). Functionally, core subunit of the mitochondrial membrane respiratory chain NADH dehydrogenase (Complex I) that is believed to belong to the minimal assembly required for catalysis. Complex I functions in the transfer of electrons from NADH to the respiratory chain. The immediate electron acceptor for the enzyme is believed to be ubiquinone. The polypeptide is NADH-ubiquinone oxidoreductase chain 4 (MT-ND4) (Crotalus concolor (Midget faded rattlesnake)).